We begin with the raw amino-acid sequence, 436 residues long: Chromosomal replication initiator protein DnaA (436 aa).

A domain I, interacts with DnaA modulators region spans residues 1-80 (MSHEAVWQHV…QAPRFELRVV (80 aa)). Residues 80-100 (VPGVVVQEDIFQAAPAEAPRP) are domain II. The segment at 101-317 (KLNPKYTFEN…GALMRAIAFA (217 aa)) is domain III, AAA+ region. ATP is bound by residues G145, G147, K148, and T149. Positions 318–436 (SLNGVELTRA…LLRTLREACT (119 aa)) are domain IV, binds dsDNA.

The protein belongs to the DnaA family. As to quaternary structure, oligomerizes as a right-handed, spiral filament on DNA at oriC.

The protein resides in the cytoplasm. Its function is as follows. Plays an essential role in the initiation and regulation of chromosomal replication. ATP-DnaA binds to the origin of replication (oriC) to initiate formation of the DNA replication initiation complex once per cell cycle. Binds the DnaA box (a 9 base pair repeat at the origin) and separates the double-stranded (ds)DNA. Forms a right-handed helical filament on oriC DNA; dsDNA binds to the exterior of the filament while single-stranded (ss)DNA is stabiized in the filament's interior. The ATP-DnaA-oriC complex binds and stabilizes one strand of the AT-rich DNA unwinding element (DUE), permitting loading of DNA polymerase. After initiation quickly degrades to an ADP-DnaA complex that is not apt for DNA replication. Binds acidic phospholipids. This chain is Chromosomal replication initiator protein DnaA, found in Thermus thermophilus (strain ATCC BAA-163 / DSM 7039 / HB27).